The sequence spans 419 residues: Probable serine/threonine-protein kinase CST (419 aa).

A lipid anchor (N-myristoyl glycine) is attached at Gly-2. The S-palmitoyl cysteine moiety is linked to residue Cys-4. Residues 8 to 48 (FSSSSPSKTGLHSHATTNNHSNGTEFSSTTGATTNSSVGQQ) form a disordered region. The segment covering 15–48 (KTGLHSHATTNNHSNGTEFSSTTGATTNSSVGQQ) has biased composition (polar residues). The 283-residue stretch at 86–368 (FKPDSMLGQG…KEVVEVLEHI (283 aa)) folds into the Protein kinase domain. 92 to 100 (LGQGGFGKV) is an ATP binding site. A Phosphoserine modification is found at Ser-117. Lys-124 serves as a coordination point for ATP. Tyr-169 is subject to Phosphotyrosine. The active-site Proton acceptor is Asp-218. Ser-222 is modified (phosphoserine). Phosphothreonine occurs at positions 253 and 258. Tyr-266 is subject to Phosphotyrosine. Positions 378-390 (SSTKQAVANSSRS) are enriched in polar residues. Positions 378–419 (SSTKQAVANSSRSSPHHYRYKAGALGAERKRATPGRFGSVEK) are disordered.

This sequence belongs to the protein kinase superfamily. Ser/Thr protein kinase family. As to quaternary structure, interacts with SOBIR1/EVR and RLK5/HAE. Post-translationally, autophosphorylated on serine, threonine and tyrosine residues.

Its subcellular location is the cell membrane. The protein localises to the nucleus. It carries out the reaction L-seryl-[protein] + ATP = O-phospho-L-seryl-[protein] + ADP + H(+). It catalyses the reaction L-threonyl-[protein] + ATP = O-phospho-L-threonyl-[protein] + ADP + H(+). Functionally, acts as a spatial inhibitor of signaling that modulates abscission zone cell adhesion and expansion. Acts both directly and indirectly by physically interacting with RLK5/HAE and SOBIR1/EVR at the cell surface. The protein is Probable serine/threonine-protein kinase CST of Arabidopsis thaliana (Mouse-ear cress).